The chain runs to 526 residues: Threonine synthase 1, chloroplastic (526 aa).

The N-terminal 40 residues, 1–40 (MASSCLFNASVSSLNPKQDPIRRHRSTSLLRHRPVVISCT), are a transit peptide targeting the chloroplast. Residues 142–144 (PYG), 165–167 (SAF), Asn172, Leu173, Lys181, and Asn187 contribute to the S-adenosyl-L-methionine site. Lys203 is modified (N6-(pyridoxal phosphate)lysine). Pyridoxal 5'-phosphate contacts are provided by residues 335 to 339 (GNLGN) and Thr472.

It belongs to the threonine synthase family. In terms of assembly, homodimer. Pyridoxal 5'-phosphate serves as cofactor.

The protein resides in the plastid. It localises to the chloroplast. It catalyses the reaction O-phospho-L-homoserine + H2O = L-threonine + phosphate. It functions in the pathway amino-acid biosynthesis; L-threonine biosynthesis; L-threonine from L-aspartate: step 5/5. Allosterically activated by S-adenosyl-L-methionine (SAM). Activated by S-adenosyl-L-ethionine, 5'-amino-5'-deoxyadenosine, sinefungin and 5'-deoxy-5-methylthioadenosine. Inhibited by AMP. Its function is as follows. Catalyzes the gamma-elimination of phosphate from L-phosphohomoserine and the beta-addition of water to produce L-threonine. This chain is Threonine synthase 1, chloroplastic (TS1), found in Arabidopsis thaliana (Mouse-ear cress).